A 363-amino-acid chain; its full sequence is Jasmonate-induced oxygenase 3 (363 aa).

One can recognise a Fe2OG dioxygenase domain in the interval E210 to P312. R216 contacts jasmonate. N218 and Y220 together coordinate 2-oxoglutarate. Residues H235, D237, and H293 each coordinate Fe cation. 2-oxoglutarate is bound by residues R303 and S305. Jasmonate is bound by residues R342 and R346.

This sequence belongs to the iron/ascorbate-dependent oxidoreductase family. Requires L-ascorbate as cofactor. Fe(2+) serves as cofactor.

It catalyses the reaction jasmonate + 2-oxoglutarate + O2 = (1R,2R)-12-hydroxyjasmonate + succinate + CO2. 2-oxoglutarate-dependent dioxygenase involved in the oxidation of jasmonate (JA), a stress-induced phytohormone synthesized in response to attack by pathogens and herbivores, which triggers the activation of defense responses via the JA-mediated signaling pathway. Converts JA to 12-hydroxyjasmonate (12OH-JA), an inactive form of JA. Is specific to free JA, and cannot oxidize the bioactive form jasmonoyl-L-isoleucine (JA-Ile) or other JA-amino acid conjugates. Prevents over-accumulation of JA and indirectly its bioactive form JA-Ile under stress response. Acts as a negative regulator of JA-mediated defense signaling, by contributing to 12OH-JA accumulation, which represses JA defense responses upon infection by the fungal pathogen Botrytis cinerea. Acts as a negative regulator of JA-mediated defense responses upon infestation by the herbivorous caterpillar Mamestra brassicae. The protein is Jasmonate-induced oxygenase 3 of Arabidopsis thaliana (Mouse-ear cress).